A 75-amino-acid polypeptide reads, in one-letter code: MKQIFIGIIRFYQKFISPMTPPTCRFYPTCSHYGLEAFQTHGALKGFWLTLKRILKCHPFHPGGFDPVPDKKDDK.

It belongs to the UPF0161 family.

It localises to the cell membrane. Functionally, could be involved in insertion of integral membrane proteins into the membrane. The sequence is that of Putative membrane protein insertion efficiency factor from Bacillus cytotoxicus (strain DSM 22905 / CIP 110041 / 391-98 / NVH 391-98).